A 117-amino-acid chain; its full sequence is DNA-directed RNA polymerase II subunit RPB11 (117 aa).

Met-1 is subject to N-acetylmethionine.

Belongs to the archaeal Rpo11/eukaryotic RPB11/RPC19 RNA polymerase subunit family. As to quaternary structure, component of the RNA polymerase II (Pol II) core complex consisting of 12 subunits: a ten-subunit catalytic core composed of POLR2A/RPB1, POLR2B/RPB2, POLR2C/RPB3, POLR2I/RPB9, POLR2J/RPB11, POLR2E/RPABC1, POLR2F/RPABC2, POLR2H/RPABC3, POLR2K/RPABC4 and POLR2L/RPABC5 and a mobile stalk composed of two subunits POLR2D/RPB4 and POLR2G/RPB7, protruding from the core and functioning primarily in transcription initiation. Part of Pol II(G) complex, in which Pol II core associates with an additional subunit POLR2M; unlike conventional Pol II, Pol II(G) functions as a transcriptional repressor. Part of TBP-based Pol II pre-initiation complex (PIC), in which Pol II core assembles with general transcription factors and other specific initiation factors including GTF2E1, GTF2E2, GTF2F1, GTF2F2, TCEA1, ERCC2, ERCC3, GTF2H2, GTF2H3, GTF2H4, GTF2H5, GTF2A1, GTF2A2, GTF2B and TBP; this large multi-subunit PIC complex mediates DNA unwinding and targets Pol II core to the transcription start site where the first phosphodiester bond forms. Interacts with AATF. Interacts with PTPN6; this interaction promotes the recruitment of RNA pol II to the PCK1 promoter.

It localises to the nucleus. In terms of biological role, core component of RNA polymerase II (Pol II), a DNA-dependent RNA polymerase which synthesizes mRNA precursors and many functional non-coding RNAs using the four ribonucleoside triphosphates as substrates. This is DNA-directed RNA polymerase II subunit RPB11 (Polr2j) from Mus musculus (Mouse).